The following is a 402-amino-acid chain: Chorismate synthase (402 aa).

NADP(+) contacts are provided by Arg40 and Arg46. FMN contacts are provided by residues 134–136 (RAS), 255–256 (QA), Gly299, 314–318 (KPIAT), and Arg340.

Belongs to the chorismate synthase family. In terms of assembly, homotetramer. Requires FMNH2 as cofactor.

The catalysed reaction is 5-O-(1-carboxyvinyl)-3-phosphoshikimate = chorismate + phosphate. The protein operates within metabolic intermediate biosynthesis; chorismate biosynthesis; chorismate from D-erythrose 4-phosphate and phosphoenolpyruvate: step 7/7. Catalyzes the anti-1,4-elimination of the C-3 phosphate and the C-6 proR hydrogen from 5-enolpyruvylshikimate-3-phosphate (EPSP) to yield chorismate, which is the branch point compound that serves as the starting substrate for the three terminal pathways of aromatic amino acid biosynthesis. This reaction introduces a second double bond into the aromatic ring system. This is Chorismate synthase from Leifsonia xyli subsp. xyli (strain CTCB07).